Reading from the N-terminus, the 1187-residue chain is MKTKFDRLGTGKRSRPSPNNIDFNDQSATFKRNKKNSRQPSFKVGLSYNSLLDDCDDENETEEIFEGRGLQFFDKDDNFSITADDTQVTSKLFDHDLEQTPDEEAKKPKKVTIRKSAKKCLSTTILPDSFRGVFKFTEFNKMQSEAFPSIYESNENCIISSPTGSGKTVLFELAILRLIKETNSDTNNTKIIYIAPTKSLCYEMYKNWFPSFVNLSVGMLTSDTSFLETEKAKKCNIIITTPEKWDLLTRRWSDYSRLFELVKLVLVDEIHTIKEKRGASLEVILTRMNTMCQNIRFVALSATVPNIEDLALWLKTNNELPANILSFDESYRQVQLTKFVYGYSFNCKNDFQKDAIYNSKLIEIIEKHADNRPVLIFCPTRASTISTAKFLLNNHIFSKSKKRCNHNPSDKILNECMQQGIAFHHAGISLEDRTAVEKEFLAGSINILCSTSTLAVGVNLPAYLVIIKGTKSWNSSEIQEYSDLDVLQMIGRAGRPQFETHGCAVIMTDSKMKQTYENLIHGTDVLESSLHLNLIEHLAAETSLETVYSIETAVNWLRNTFFYVRFGKNPAAYQEVNRYVSFHSVEDSQINQFCQYLLDTLVKVKIIDISNGEYKSTAYGNAMTRHYISFESMKQFINAKKFLSLQGILNLLATSEEFSVMRVRHNEKKLFKEINLSPLLKYPFLTEKKQSQIIDRVSQKVSLLIQYELGGLEFPSYEGASKLHQTLVQDKFLVFRHCFRLLKCMVDTFIEKSDGTSLKNTLFLLRSLNGHCWENTPMVLRQLKTIGLVSVRRLIRHGITNLEEMGHLSDTQIEYYLNLKIGNGIKIKNDISLLPCLNIRTKLENCKIENEELWLTFKVEISATFKSSIWHGQHLSLDIETEKSSGELIDFRRLQVNKLQSPRGFRISAKISPKLEKIEFSIHCQEIAGLGKTIVYSTDHLASQFSAKTPNIRKDLNSLEKCLFYESSSDGEVGKTSRVSHKDGLEESLSSDDSILDYLNERKKSSKAVESAAVIHPEAHSSSHFSNGRQVRSNGNYECFHSCKDKTQCRHLCCKEGIPVKYIKEKGPSSIKPVSKPDQIRQPLLAKNINTTPHLEKRLNSKPKQWQEENTDIATVHTLPSKIYNLSQQMSSMEAGEQVLKSGPENCPEIIPIDLESSDSYSSNTAASSISDPNGDLDFLGSDIEFE.

The interval 1 to 41 (MKTKFDRLGTGKRSRPSPNNIDFNDQSATFKRNKKNSRQPS) is disordered. Residues 16–30 (PSPNNIDFNDQSATF) are compositionally biased toward polar residues. The Helicase ATP-binding domain maps to 148–322 (PSIYESNENC…WLKTNNELPA (175 aa)). 161–168 (SPTGSGKT) provides a ligand contact to ATP. The DEIH box signature appears at 268–271 (DEIH). Residues 360 to 542 (KLIEIIEKHA…NLIEHLAAET (183 aa)) enclose the Helicase C-terminal domain. The 307-residue stretch at 616–922 (STAYGNAMTR…PKLEKIEFSI (307 aa)) folds into the SEC63 domain. The C4-type zinc finger occupies 1039 to 1054 (CFHSCKDKTQCRHLCC). The tract at residues 1146–1187 (NCPEIIPIDLESSDSYSSNTAASSISDPNGDLDFLGSDIEFE) is disordered. Low complexity predominate over residues 1158 to 1171 (SDSYSSNTAASSIS).

It belongs to the helicase family. SKI2 subfamily. In terms of assembly, oligomerizes. The cofactor is a divalent metal cation. It depends on Zn(2+) as a cofactor.

The protein localises to the nucleus. It catalyses the reaction Couples ATP hydrolysis with the unwinding of duplex DNA by translocating in the 3'-5' direction.. The enzyme catalyses ATP + H2O = ADP + phosphate + H(+). Its function is as follows. DNA-dependent ATPase and 3'-5' DNA helicase. Required in the control of double strand break transition and crossover during meiosis. ATPase is slightly better stimulated by single-stranded (ss) than double-stranded (ds)DNA. Unwinds Holliday junction (HJ) DNA to Y-DNA and to ssDNA. Efficient unwinding requires 6 nucleotides of 3'-ssDNA; seems to initiate unwinding from blunt ends when they open slightly. Binds HJ, dsDNA, ssDNA and 3'- and 5-overhang DNA. This chain is ATP-dependent DNA helicase MER3, found in Saccharomyces cerevisiae (strain ATCC 204508 / S288c) (Baker's yeast).